A 193-amino-acid chain; its full sequence is Putative deoxynucleotide monophosphate kinase (193 aa).

Residue Lys10 coordinates dGMP. The ATP site is built by Gly13 and Thr16. Leu36, Lys37, Lys58, Asp122, Arg124, Glu128, and Ser155 together coordinate dGMP.

It belongs to the dNMP kinase family.

It carries out the reaction a 2'-deoxyribonucleoside 5'-phosphate + ATP = a 2'-deoxyribonucleoside 5'-diphosphate + ADP. This chain is Putative deoxynucleotide monophosphate kinase, found in Acanthamoeba polyphaga mimivirus (APMV).